We begin with the raw amino-acid sequence, 460 residues long: Phosphomethylpyrimidine synthase (460 aa).

Substrate contacts are provided by residues Asn-80, Met-109, Tyr-138, His-174, 194-196 (SRG), 235-238 (DSLR), and Glu-274. His-278 lines the Zn(2+) pocket. Residue Tyr-301 coordinates substrate. A Zn(2+)-binding site is contributed by His-342. The [4Fe-4S] cluster site is built by Cys-422, Cys-425, and Cys-430.

The protein belongs to the ThiC family. In terms of assembly, homodimer. Requires [4Fe-4S] cluster as cofactor.

It catalyses the reaction 5-amino-1-(5-phospho-beta-D-ribosyl)imidazole + S-adenosyl-L-methionine = 4-amino-2-methyl-5-(phosphooxymethyl)pyrimidine + CO + 5'-deoxyadenosine + formate + L-methionine + 3 H(+). It functions in the pathway cofactor biosynthesis; thiamine diphosphate biosynthesis. Catalyzes the synthesis of the hydroxymethylpyrimidine phosphate (HMP-P) moiety of thiamine from aminoimidazole ribotide (AIR) in a radical S-adenosyl-L-methionine (SAM)-dependent reaction. The chain is Phosphomethylpyrimidine synthase from Sulfurimonas denitrificans (strain ATCC 33889 / DSM 1251) (Thiomicrospira denitrificans (strain ATCC 33889 / DSM 1251)).